The chain runs to 205 residues: Holliday junction branch migration complex subunit RuvA (205 aa).

Residues 1-64 (MIGKLTGLVD…EDAIRLFGFP (64 aa)) are domain I. The segment at 65–143 (SEVERDWFRL…ALGPVDSLTA (79 aa)) is domain II. The tract at residues 144–153 (KLTIAEAEGT) is flexible linker. The domain III stretch occupies residues 153 to 205 (TAPVAAQDAITALVNLGYGRPQAAAAVATSLEALGETAPLADLIRRGLKELAR).

This sequence belongs to the RuvA family. As to quaternary structure, homotetramer. Forms an RuvA(8)-RuvB(12)-Holliday junction (HJ) complex. HJ DNA is sandwiched between 2 RuvA tetramers; dsDNA enters through RuvA and exits via RuvB. An RuvB hexamer assembles on each DNA strand where it exits the tetramer. Each RuvB hexamer is contacted by two RuvA subunits (via domain III) on 2 adjacent RuvB subunits; this complex drives branch migration. In the full resolvosome a probable DNA-RuvA(4)-RuvB(12)-RuvC(2) complex forms which resolves the HJ.

Its subcellular location is the cytoplasm. The RuvA-RuvB-RuvC complex processes Holliday junction (HJ) DNA during genetic recombination and DNA repair, while the RuvA-RuvB complex plays an important role in the rescue of blocked DNA replication forks via replication fork reversal (RFR). RuvA specifically binds to HJ cruciform DNA, conferring on it an open structure. The RuvB hexamer acts as an ATP-dependent pump, pulling dsDNA into and through the RuvAB complex. HJ branch migration allows RuvC to scan DNA until it finds its consensus sequence, where it cleaves and resolves the cruciform DNA. The sequence is that of Holliday junction branch migration complex subunit RuvA from Beijerinckia indica subsp. indica (strain ATCC 9039 / DSM 1715 / NCIMB 8712).